Consider the following 382-residue polypeptide: Galactokinase (382 aa).

34 to 37 (EHTD) is a substrate binding site. 124-130 (GAGLSSS) is a binding site for ATP. Mg(2+) is bound by residues Ser130 and Glu162. Catalysis depends on Asp174, which acts as the Proton acceptor. Tyr223 serves as a coordination point for substrate.

It belongs to the GHMP kinase family. GalK subfamily.

The protein localises to the cytoplasm. It catalyses the reaction alpha-D-galactose + ATP = alpha-D-galactose 1-phosphate + ADP + H(+). It participates in carbohydrate metabolism; galactose metabolism. In terms of biological role, catalyzes the transfer of the gamma-phosphate of ATP to D-galactose to form alpha-D-galactose-1-phosphate (Gal-1-P). The protein is Galactokinase of Salmonella paratyphi B (strain ATCC BAA-1250 / SPB7).